The chain runs to 413 residues: Tubby-like F-box protein 6 (413 aa).

Residues 67–122 enclose the F-box domain; sequence SIWVDLPPELLLDIIQRIESEQSLWPGRRDVVACASVCKSWREMTKEVVKVPELSG.

It belongs to the TUB family. In terms of tissue distribution, ubiquitous, with higher levels in flowers.

This is Tubby-like F-box protein 6 from Arabidopsis thaliana (Mouse-ear cress).